Here is a 216-residue protein sequence, read N- to C-terminus: Adenylate kinase (216 aa).

ATP is bound at residue glycine 13 to threonine 18. Residues threonine 33–valine 66 form an NMP region. AMP-binding positions include threonine 34, arginine 39, aspartate 64 to valine 66, glycine 89 to arginine 92, and glutamine 96. Residues glycine 125 to aspartate 162 form an LID region. Residue arginine 126 coordinates ATP. Positions 129, 132, 149, and 152 each coordinate Zn(2+). Residues arginine 159 and arginine 170 each coordinate AMP. Glutamine 198 contributes to the ATP binding site.

This sequence belongs to the adenylate kinase family. In terms of assembly, monomer.

The protein resides in the cytoplasm. The enzyme catalyses AMP + ATP = 2 ADP. Its pathway is purine metabolism; AMP biosynthesis via salvage pathway; AMP from ADP: step 1/1. Catalyzes the reversible transfer of the terminal phosphate group between ATP and AMP. Plays an important role in cellular energy homeostasis and in adenine nucleotide metabolism. The polypeptide is Adenylate kinase (Haloarcula marismortui (strain ATCC 43049 / DSM 3752 / JCM 8966 / VKM B-1809) (Halobacterium marismortui)).